The following is a 612-amino-acid chain: MLKLVILCFALFYNTVSSTRFLFGVEVKCDFDEVFQLTVSHWEDDGNTFWDRDEDITGRMTMFARKKIFFYQDGHHGFEFGKLEPYGWFLHNCTKNGNFREYRHGLSSTSGSNGLEYIEYTMSEFLKIVRANKKSDRKLDKTYLWESYLHQFEKGKTSFIPVEAFNRNLTVNFNECVKEGVIFETVVHDYDKNCDSIQVRWFARIEKVCGYRVLAQFIGADTKFWLNILSDDMFGLANAAMSDPNMDKIVYAPPLAINEEYQNDMVNYVNNCIDGEIVGQTSLSPKFDEGKALLSKHRFKVGQRLELLNYSNSTEIRVARIQEICGRRMNVSITKKDFPESLPDADDDRQVFSSGSQYWIDEGSFFIFPVGFAAVNGYQLNAKKEYIEHTNKIAQAIKNGENPRYDSDDVTFDQLAKDPIDPMIWRKVKVGQKFELIDPLAQQFNNLHVASILKFCKTEGYLIVGMDGPDALEDSFPIHINNTFMFPVGYAEKYNLELVPPDEFKGTFRWDEYLEKESAETLPLDLFKPMPSQERLDKFKVGLRLEAADMCENQFICPATVKSVHGRLINVNFDGWDEEFDELYDVDSHDILPIGWCEAHSYVLQPPKKYNY.

MBT repeat units follow at residues Tyr143 to Ile249, Asn263 to Leu380, Asn381 to Pro501, and Phe508 to Pro607.

In terms of assembly, interacts preferentially with histone H3 that is dimethylated or trimethylated at 'Lys-9'.

It is found in the nucleus. The protein localises to the chromosome. In terms of biological role, synthetic multivulva class B (synMuvB) protein required to repress the induction of vulval development by Ras signaling. Unlike other synMuv proteins it does not associate with the multiprotein DRM complex and the NuRD-like complex. Interaction with methylated histone H3 is essential for vulva development. It has a role in maintaining genome stability. This Caenorhabditis elegans protein is Protein lin-61 (lin-61).